Reading from the N-terminus, the 124-residue chain is Meiotically up-regulated gene 103 protein (124 aa).

It is found in the nucleus. It localises to the nucleolus. In terms of biological role, has a role in meiosis. The polypeptide is Meiotically up-regulated gene 103 protein (mug103) (Schizosaccharomyces pombe (strain 972 / ATCC 24843) (Fission yeast)).